The sequence spans 463 residues: Lysosomal proton-coupled steroid conjugate and bile acid symporter SLC46A3 (463 aa).

An N-terminal signal peptide occupies residues 1–20; the sequence is MKILFVEPAIFLSAFAMTLT. Over 21 to 73 the chain is Extracellular; the sequence is SPLTTQYVYRRIWEETGNYTFSSDSNISECEKNKSSPIFAFQEEVQKKVSRFN. N-linked (GlcNAc...) asparagine glycosylation is found at Asn38, Asn46, and Asn53. The helical transmembrane segment at 74–94 threads the bilayer; it reads LQMDISGLIPGLVSTFILLSI. The Cytoplasmic segment spans residues 95-101; it reads SDHYGRK. Residues 102-124 traverse the membrane as a helical segment; sequence FPMILSSVGALATSVWLCLLCYF. The Extracellular portion of the chain corresponds to 125 to 133; it reads AFPFQLLIA. Residues 134–156 traverse the membrane as a helical segment; sequence STFIGAFCGNYTTFWGACFAYIV. Residues 157–170 are Cytoplasmic-facing; the sequence is DQCKEHKQKTIRIA. The helical transmembrane segment at 171–191 threads the bilayer; it reads VIDFLLGLVTGLTGLSSGYFI. The Extracellular portion of the chain corresponds to 192 to 197; it reads RELGFG. Residues 198-218 traverse the membrane as a helical segment; sequence WSFLIIAASLAVNLIYILFFL. Topologically, residues 219–261 are cytoplasmic; the sequence is GDPVKECSSQNVTMSCSEGFKNLFYRTYMLFKNASGKRRFLLC. Residues 262–282 traverse the membrane as a helical segment; sequence LLLFTTITYFFVVIGIAPIFI. At 283-294 the chain is on the extracellular side; sequence LYELDSPLCWNE. A helical membrane pass occupies residues 295–315; sequence VFIGYGSALGSASFLTSFLGI. Residues 316 to 324 are Cytoplasmic-facing; the sequence is WLFSYCMED. The helical transmembrane segment at 325–345 threads the bilayer; it reads IHMAFIGIFTTMTGMVMTAFA. Residues 346-347 lie on the Extracellular side of the membrane; the sequence is ST. A helical transmembrane segment spans residues 348–368; sequence TLMMFLARVPFLFTIVPFSVL. Residues 369–382 are Cytoplasmic-facing; the sequence is RSMLSKVVRSTEQG. A helical transmembrane segment spans residues 383–403; it reads ILFACIAFLETLGGVTAVSTF. Over 404–415 the chain is Extracellular; sequence NGIYSATVAWYP. The chain crosses the membrane as a helical span at residues 416–436; the sequence is GFTFLLSAGLLLLPAISLCVV. The Cytoplasmic portion of the chain corresponds to 437–463; the sequence is KCTSWNEGSYELLIQEESSEDASDRAC. Positions 446–449 match the Tyrosine-based lysosomal-sorting motif motif; it reads YELL.

This sequence belongs to the major facilitator superfamily. SLC46A family.

The protein resides in the lysosome membrane. It catalyses the reaction estrone 3-sulfate(out) + n H(+)(out) = estrone 3-sulfate(in) + n H(+)(in). The enzyme catalyses 25-hydroxyvitamin D3 sulfate(out) + n H(+)(out) = 25-hydroxyvitamin D3 sulfate(in) + n H(+)(in). The catalysed reaction is cholate(out) + n H(+)(out) = cholate(in) + n H(+)(in). It carries out the reaction glycocholate(out) + n H(+)(out) = glycocholate(in) + n H(+)(in). It catalyses the reaction taurocholate(out) + n H(+)(out) = taurocholate(in) + n H(+)(in). The enzyme catalyses dehydroepiandrosterone 3-sulfate(out) + n H(+)(out) = dehydroepiandrosterone 3-sulfate(in) + n H(+)(in). The catalysed reaction is N-acetyl-D-muramoyl-L-alanyl-D-isoglutamine(out) + n H(+)(out) = N-acetyl-D-muramoyl-L-alanyl-D-isoglutamine(in) + n H(+)(in). It carries out the reaction 2',3'-cGAMP(out) + n H(+)(out) = 2',3'-cGAMP(in) + n H(+)(in). Lysosomal proton-coupled steroid conjugate and bile acid transporter. Preferentially recognizes lipophilic steroid conjugates or bile acis as endogenous substrates and seems to mediate escape from lysosomes to the cytoplasm. Modulates hepatic cytosolic copper homeostasis, maybe acting as a lysosomal copper transporter and sequestering copper ions in the lysosome. Delivers pathogen-associated molecular patterns to cytosolic pattern recognition receptors as part of the innate immune response to microbes. Selectively transports bacterial muramyl dipeptide (MDP) into the cytosol for recognition by NOD2, triggering inflammatory responses. Likely acts as a redundant importer of cyclic GMP-AMP dinucleotides (cGAMPs) in monocyte and macrophage cell lineages. The transport mechanism, its electrogenicity and stoichiometry remain to be elucidated. This chain is Lysosomal proton-coupled steroid conjugate and bile acid symporter SLC46A3 (SLC46A3), found in Pongo abelii (Sumatran orangutan).